An 838-amino-acid chain; its full sequence is Protein translocase subunit SecA (838 aa).

ATP-binding positions include Gln86, 104–108, and Asp493; that span reads GEGKT. The interval 793–838 is disordered; the sequence is NTQAVSGGEDSGKKKTKKPVVKSNTVKRNDPCPCGSGKKYKNCHGQ. Residues Cys824, Cys826, Cys835, and His836 each contribute to the Zn(2+) site.

It belongs to the SecA family. In terms of assembly, monomer and homodimer. Part of the essential Sec protein translocation apparatus which comprises SecA, SecYEG and auxiliary proteins SecDF. Other proteins may also be involved. It depends on Zn(2+) as a cofactor.

The protein resides in the cell membrane. It is found in the cytoplasm. It catalyses the reaction ATP + H2O + cellular proteinSide 1 = ADP + phosphate + cellular proteinSide 2.. In terms of biological role, part of the Sec protein translocase complex. Interacts with the SecYEG preprotein conducting channel. Has a central role in coupling the hydrolysis of ATP to the transfer of proteins into and across the cell membrane, serving as an ATP-driven molecular motor driving the stepwise translocation of polypeptide chains across the membrane. The protein is Protein translocase subunit SecA of Oceanobacillus iheyensis (strain DSM 14371 / CIP 107618 / JCM 11309 / KCTC 3954 / HTE831).